Reading from the N-terminus, the 917-residue chain is Protein Ami (917 aa).

A signal peptide spans 1–30; the sequence is MKKLVKSAVVFAGLVFIGTSATMITEKASA. Positions 118–245 constitute an N-acetylmuramoyl-L-alanine amidase domain; the sequence is KPEGIVIHET…YLGGTTHTDP (128 aa). The segment at 262–917 is GW repeat region, necessary and sufficient for cell surface attachment; it reads LINEKYKAMQ…KAANLSAKKQ (656 aa). GW domains lie at 279–358, 361–435, 440–519, 522–596, 601–679, 682–756, 761–840, and 843–917; these read YDKA…TFYT, MEKT…TTKY, MEKN…ATQY, and MEKN…AKKQ.

It in the N-terminal section; belongs to the N-acetylmuramoyl-L-alanine amidase 2 family.

It localises to the cell surface. The protein resides in the cell membrane. In terms of biological role, a bacteriolysin able to lyse both L.monocytogenes and S.aureus. The sequence is that of Protein Ami from Listeria monocytogenes serotype 1/2a (strain EGD / Mackaness).